The following is an 87-amino-acid chain: Small ribosomal subunit protein bS20 (87 aa).

The disordered stretch occupies residues 1–26 (MANIKSAKKRAVQSEKARKHNASRRS).

The protein belongs to the bacterial ribosomal protein bS20 family.

Functionally, binds directly to 16S ribosomal RNA. This Salmonella typhi protein is Small ribosomal subunit protein bS20.